A 145-amino-acid chain; its full sequence is D-aminoacyl-tRNA deacylase (145 aa).

The Gly-cisPro motif, important for rejection of L-amino acids motif lies at 133 to 134; sequence GP.

It belongs to the DTD family. In terms of assembly, homodimer.

The protein resides in the cytoplasm. The catalysed reaction is glycyl-tRNA(Ala) + H2O = tRNA(Ala) + glycine + H(+). It catalyses the reaction a D-aminoacyl-tRNA + H2O = a tRNA + a D-alpha-amino acid + H(+). Functionally, an aminoacyl-tRNA editing enzyme that deacylates mischarged D-aminoacyl-tRNAs. Also deacylates mischarged glycyl-tRNA(Ala), protecting cells against glycine mischarging by AlaRS. Acts via tRNA-based rather than protein-based catalysis; rejects L-amino acids rather than detecting D-amino acids in the active site. By recycling D-aminoacyl-tRNA to D-amino acids and free tRNA molecules, this enzyme counteracts the toxicity associated with the formation of D-aminoacyl-tRNA entities in vivo and helps enforce protein L-homochirality. This is D-aminoacyl-tRNA deacylase from Cutibacterium acnes (strain DSM 16379 / KPA171202) (Propionibacterium acnes).